Here is a 263-residue protein sequence, read N- to C-terminus: MKRICSVSSVQLFSRSFRALASPRSLNYPLQCIKRSSVRMESSNFSSGVRTESSVKPRGALIVLEGLDRSGKSTQCAKLLSFLNGLGHPTELWRFPDRETSVGQMISAYLSNKSQLDDHTIHLLFSANRWEKRSLMEEKLKTGTTLIVDRYSYSGVAFSSAKGLDIEWCKAPEIGLLAPDSVLYLDISPERAAERGGYGDERYERVEFQKKVADFYQTLGDSSWKIINASDAMEEVEKKIQQVVLDQVKECTEGKPLSLLWSS.

The N-terminal 51 residues, 1–51 (MKRICSVSSVQLFSRSFRALASPRSLNYPLQCIKRSSVRMESSNFSSGVRT), are a transit peptide targeting the mitochondrion. 66–74 (GLDRSGKST) contacts ATP.

The protein belongs to the thymidylate kinase family. In terms of tissue distribution, expressed in root, rosette leaves, flower buds, flowers and siliques.

It localises to the mitochondrion. It is found in the cytoplasm. The protein resides in the nucleus. The protein localises to the nucleoplasm. The catalysed reaction is dTMP + ATP = dTDP + ADP. Its pathway is pyrimidine metabolism; dTTP biosynthesis. Functionally, catalyzes the conversion of dTMP to dTDP. Involved in the regulation of DNA replication. Is essential to promote the first division of the zygote. The polypeptide is Thymidylate kinase (Arabidopsis thaliana (Mouse-ear cress)).